A 253-amino-acid chain; its full sequence is Testis-expressed protein 47 (253 aa).

In terms of tissue distribution, testis-specific.

The polypeptide is Testis-expressed protein 47 (Homo sapiens (Human)).